The primary structure comprises 489 residues: Cytochrome P450 2C41 (489 aa).

Heme is bound at residue cysteine 434.

It belongs to the cytochrome P450 family. Heme serves as cofactor.

It is found in the endoplasmic reticulum membrane. Its subcellular location is the microsome membrane. It catalyses the reaction an organic molecule + reduced [NADPH--hemoprotein reductase] + O2 = an alcohol + oxidized [NADPH--hemoprotein reductase] + H2O + H(+). Functionally, cytochromes P450 are a group of heme-thiolate monooxygenases. In liver microsomes, this enzyme is involved in an NADPH-dependent electron transport pathway. It oxidizes a variety of structurally unrelated compounds, including steroids, fatty acids, and xenobiotics. In Canis lupus familiaris (Dog), this protein is Cytochrome P450 2C41 (CYP2C41).